The chain runs to 3387 residues: Genome polyprotein (3387 aa).

Residues 1-100 (MNQRKKVVRP…LNILNGRKRS (100 aa)) are Cytoplasmic-facing. A hydrophobic; homodimerization of capsid protein C region spans residues 36 to 71 (LFSGKGPLRMVLAFITFLRVLSIPPTAGILKRWGQL). The propeptide at 100 to 113 (STMTLLCLIPTVMA) is ER anchor for the capsid protein C, removed in mature form by serine protease NS3. A helical membrane pass occupies residues 101 to 117 (TMTLLCLIPTVMAFHLS). At 118–237 (TRDGEPLMIV…GAWKHAQRVE (120 aa)) the chain is on the extracellular side. An N-linked (GlcNAc...) asparagine; by host glycan is attached at asparagine 182. Residues 238-258 (SWILRNPGFALLAGFMAYMIG) traverse the membrane as a helical segment. Residues 259-265 (QTGIQRT) are Cytoplasmic-facing. The helical transmembrane segment at 266–279 (VFFVLMMLVAPSYG) threads the bilayer. Residues 280–723 (MRCVGVGNRD…AVHQVFGSVY (444 aa)) are Extracellular-facing. 4 disulfide bridges follow: cysteine 282–cysteine 309, cysteine 339–cysteine 400, cysteine 353–cysteine 384, and cysteine 371–cysteine 395. An N-linked (GlcNAc...) asparagine; by host glycan is attached at asparagine 346. The fusion peptide stretch occupies residues 377–390 (DRGWGNGCGLFGKG). A glycan (N-linked (GlcNAc...) asparagine; by host) is linked at asparagine 432. 2 disulfides stabilise this stretch: cysteine 464/cysteine 564 and cysteine 581/cysteine 612. The helical transmembrane segment at 724 to 744 (TTMFGGVSWMVRILIGFLVLW) threads the bilayer. Residues 745 to 750 (IGTNSR) are Cytoplasmic-facing. The helical transmembrane segment at 751 to 771 (NTSMAMTCIAVGGITLFLGFT) threads the bilayer. Residues 772–1194 (VQADMGCVVS…MLGDTMSGRI (423 aa)) lie on the Extracellular side of the membrane. Cystine bridges form between cysteine 778–cysteine 789, cysteine 829–cysteine 917, cysteine 953–cysteine 997, cysteine 1054–cysteine 1103, cysteine 1065–cysteine 1087, and cysteine 1086–cysteine 1090. Residues asparagine 904 and asparagine 981 are each glycosylated (N-linked (GlcNAc...) asparagine; by host). Residues 1195–1218 (GGQVHLAIMAVFKMSPGYVLGVFL) form a helical membrane-spanning segment. At 1219-1224 (RKLTSR) the chain is on the lumenal side. A helical membrane pass occupies residues 1225 to 1243 (ETALMVIGMAMTTVLSIPH). At 1244–1267 (DLMELIDGISLGLILLKIVTQFDN) the chain is on the cytoplasmic side. The helical transmembrane segment at 1268 to 1288 (TQVGTLALSLTFIRSTMPLVM) threads the bilayer. Position 1289 (alanine 1289) is a topological domain, lumenal. The helical transmembrane segment at 1290–1308 (WRTIMAVLFVVTLIPLCRT) threads the bilayer. The Lumenal portion of the chain corresponds to 1309–1316 (SCLQKQSH). A helical transmembrane segment spans residues 1317–1337 (WVEITALILGAQALPVYLMTL). The Cytoplasmic segment spans residues 1338-1345 (MKGASRRS). A helical membrane pass occupies residues 1346–1366 (WPLNEGIMAVGLVSLLGSALL). Topologically, residues 1367–1369 (KND) are lumenal. The helical transmembrane segment at 1370-1390 (VPLAGPMVAGGLLLAAYVMSG) threads the bilayer. Over 1391-1437 (SSADLSLEKAANVQWDEMADITGSSPIIEVKQDEDGSFSIRDVEETN) the chain is Cytoplasmic. Positions 1397–1436 (LEKAANVQWDEMADITGSSPIIEVKQDEDGSFSIRDVEET) are interacts with and activates NS3 protease. The helical intramembrane region spans 1438-1458 (MITLLVKLALITVSGLYPLAI). The Cytoplasmic segment spans residues 1459–2143 (PVTMTLWYMW…QHALNELPES (685 aa)). The region spanning 1475 to 1652 (SGALWDVPSP…ERIGEPDYEV (178 aa)) is the Peptidase S7 domain. Active-site charge relay system; for serine protease NS3 activity residues include histidine 1525, aspartate 1549, and serine 1609. The region spanning 1654–1810 (EDIFRKKRLT…QSNSPIEDIE (157 aa)) is the Helicase ATP-binding domain. Residues 1658–1661 (RKKR) form an important for RNA-binding region. Residue 1667–1674 (LHPGAGKT) participates in ATP binding. The DEAH box signature appears at 1758–1761 (DEAH). The Helicase C-terminal domain maps to 1820–1987 (TGFDWITDYQ…IIPTLFGPER (168 aa)). Lysine 1862 is modified (N6-acetyllysine; by host). A helical transmembrane segment spans residues 2144-2164 (LETLMLVALLGAMTAGTFLFF). The Lumenal portion of the chain corresponds to 2165–2169 (MQGKG). Positions 2170-2190 (IGKLSMGLITIAVASGLLWVA) form an intramembrane region, helical. Glutamate 2191 is a topological domain (lumenal). Residues 2192–2212 (LQPQWIAASIILEFFLMVLLI) traverse the membrane as a helical segment. Over 2213–2225 (PEPEKQRTPQDNQ) the chain is Cytoplasmic. Residues 2226–2246 (LIYVILTILTIIGLIAANEMG) form a helical membrane-spanning segment. Residues 2247-2270 (LIEKTKTDFGFYQVKTETTILDVD) lie on the Lumenal side of the membrane. An intramembrane region (helical) is located at residues 2271-2291 (LRPASAWTLYAVATTILTPML). Topologically, residues 2292–2301 (RHTIENTSAN) are lumenal. N-linked (GlcNAc...) asparagine; by host glycosylation is found at asparagine 2297 and asparagine 2301. The helical intramembrane region spans 2302 to 2322 (LSLAAIANQAAVLMGLGKGWP). At 2323–2343 (LHRVDLGVPLLAMGCYSQVNP) the chain is on the lumenal side. A helical membrane pass occupies residues 2344–2364 (TTLTASLVMLLVHYAIIGPGL). The Cytoplasmic segment spans residues 2365–2409 (QAKATREAQKRTAAGIMKNPTVDGITVIDLEPISYDPKFEKQLGQ). Residues 2410–2430 (VMLLVLCAGQLLLMRTTWAFC) traverse the membrane as a helical segment. The Lumenal segment spans residues 2431 to 2455 (EVLTLATGPILTLWEGNPGRFWNTT). Residue asparagine 2453 is glycosylated (N-linked (GlcNAc...) asparagine; by host). Residues 2456-2476 (IAVSTANIFRGSYLAGAGLAF) form a helical membrane-spanning segment. Residues 2477–3387 (SLIKNAQTPR…SAPSESEGVL (911 aa)) are Cytoplasmic-facing. An mRNA cap 0-1 NS5-type MT domain is found at 2489 to 2751 (TGTTGETLGE…DVDLGAGTRS (263 aa)). Serine 2543 serves as a coordination point for S-adenosyl-L-methionine. At serine 2543 the chain carries Phosphoserine. Lysine 2548 functions as the For 2'-O-MTase activity in the catalytic mechanism. An SUMO-interacting motif motif is present at residues 2564–2567 (VVDL). The S-adenosyl-L-methionine site is built by glycine 2573, tryptophan 2574, threonine 2591, lysine 2592, aspartate 2618, and valine 2619. The For 2'-O-MTase activity role is filled by aspartate 2633. Isoleucine 2634 lines the S-adenosyl-L-methionine pocket. Catalysis depends on for 2'-O-MTase activity residues lysine 2668 and glutamate 2704. Tyrosine 2706 lines the S-adenosyl-L-methionine pocket. Zn(2+)-binding residues include glutamate 2925, histidine 2929, cysteine 2934, and cysteine 2937. The RdRp catalytic domain maps to 3016–3166 (LMYADDTAGW…PLDERFSTSL (151 aa)). Histidine 3200, cysteine 3216, and cysteine 3335 together coordinate Zn(2+).

The protein in the N-terminal section; belongs to the class I-like SAM-binding methyltransferase superfamily. mRNA cap 0-1 NS5-type methyltransferase family. As to quaternary structure, homodimer. Interacts (via N-terminus) with host EXOC1 (via C-terminus); this interaction results in EXOC1 degradation through the proteasome degradation pathway. Forms heterodimers with envelope protein E in the endoplasmic reticulum and Golgi. In terms of assembly, homodimer; in the endoplasmic reticulum and Golgi. Interacts with protein prM. Interacts with non-structural protein 1. As to quaternary structure, homodimer; Homohexamer when secreted. Interacts with envelope protein E. Interacts (via N-terminus) with serine protease NS3. In terms of assembly, forms a heterodimer with serine protease NS3. May form homooligomers. As to quaternary structure, forms a heterodimer with NS2B. Interacts with NS4B. Interacts with unphosphorylated RNA-directed RNA polymerase NS5; this interaction stimulates RNA-directed RNA polymerase NS5 guanylyltransferase activity. Interacts with host SHFL. Interacts with host MAVS; this interaction inhibits the synthesis of IFN-beta. Interacts with host SHFL. Interacts with host AUP1; the interaction occurs in the presence of Dengue virus NS4B and induces lipophagy which facilitates production of virus progeny particles. In terms of assembly, interacts with serine protease NS3. As to quaternary structure, homodimer. Interacts with host STAT2; this interaction inhibits the phosphorylation of the latter, and, when all viral proteins are present (polyprotein), targets STAT2 for degradation. Interacts with serine protease NS3. Interacts with host PAF1 complex; the interaction may prevent the recruitment of the PAF1 complex to interferon-responsive genes, and thus reduces the immune response. In terms of processing, specific enzymatic cleavages in vivo yield mature proteins. Cleavages in the lumen of endoplasmic reticulum are performed by host signal peptidase, whereas cleavages in the cytoplasmic side are performed by serine protease NS3. Signal cleavage at the 2K-4B site requires a prior NS3 protease-mediated cleavage at the 4A-2K site. Post-translationally, cleaved in post-Golgi vesicles by a host furin, releasing the mature small envelope protein M, and peptide pr. This cleavage is incomplete as up to 30% of viral particles still carry uncleaved prM. N-glycosylated. In terms of processing, N-glycosylated. The excreted form is glycosylated and this is required for efficient secretion of the protein from infected cells. Post-translationally, acetylated by host KAT5. Acetylation modulates NS3 RNA-binding and unwinding activities and plays an important positive role for viral replication. Sumoylation of RNA-directed RNA polymerase NS5 increases NS5 protein stability allowing proper viral RNA replication. In terms of processing, phosphorylated on serines residues. This phosphorylation may trigger NS5 nuclear localization.

It localises to the virion. The protein localises to the host nucleus. Its subcellular location is the host cytoplasm. It is found in the host perinuclear region. The protein resides in the secreted. It localises to the virion membrane. The protein localises to the host endoplasmic reticulum membrane. Its subcellular location is the host mitochondrion. It carries out the reaction Selective hydrolysis of -Xaa-Xaa-|-Yaa- bonds in which each of the Xaa can be either Arg or Lys and Yaa can be either Ser or Ala.. The catalysed reaction is RNA(n) + a ribonucleoside 5'-triphosphate = RNA(n+1) + diphosphate. It catalyses the reaction a ribonucleoside 5'-triphosphate + H2O = a ribonucleoside 5'-diphosphate + phosphate + H(+). The enzyme catalyses ATP + H2O = ADP + phosphate + H(+). It carries out the reaction a 5'-end (5'-triphosphoguanosine)-ribonucleoside in mRNA + S-adenosyl-L-methionine = a 5'-end (N(7)-methyl 5'-triphosphoguanosine)-ribonucleoside in mRNA + S-adenosyl-L-homocysteine. The catalysed reaction is a 5'-end (N(7)-methyl 5'-triphosphoguanosine)-ribonucleoside in mRNA + S-adenosyl-L-methionine = a 5'-end (N(7)-methyl 5'-triphosphoguanosine)-(2'-O-methyl-ribonucleoside) in mRNA + S-adenosyl-L-homocysteine + H(+). In terms of biological role, plays a role in virus budding by binding to the cell membrane and gathering the viral RNA into a nucleocapsid that forms the core of a mature virus particle. During virus entry, may induce genome penetration into the host cytoplasm after hemifusion induced by the surface proteins. Can migrate to the cell nucleus where it modulates host functions. Overcomes the anti-viral effects of host EXOC1 by sequestering and degrading the latter through the proteasome degradation pathway. Inhibits RNA silencing by interfering with host Dicer. Functionally, prevents premature fusion activity of envelope proteins in trans-Golgi by binding to envelope protein E at pH6.0. After virion release in extracellular space, gets dissociated from E dimers. Its function is as follows. Acts as a chaperone for envelope protein E during intracellular virion assembly by masking and inactivating envelope protein E fusion peptide. prM is the only viral peptide matured by host furin in the trans-Golgi network probably to avoid catastrophic activation of the viral fusion activity in acidic Golgi compartment prior to virion release. prM-E cleavage is inefficient, and many virions are only partially matured. These uncleaved prM would play a role in immune evasion. In terms of biological role, may play a role in virus budding. Exerts cytotoxic effects by activating a mitochondrial apoptotic pathway through M ectodomain. May display a viroporin activity. Binds to host cell surface receptor and mediates fusion between viral and cellular membranes. Envelope protein is synthesized in the endoplasmic reticulum in the form of heterodimer with protein prM. They play a role in virion budding in the ER, and the newly formed immature particle is covered with 60 spikes composed of heterodimer between precursor prM and envelope protein E. The virion is transported to the Golgi apparatus where the low pH causes dissociation of PrM-E heterodimers and formation of E homodimers. prM-E cleavage is inefficient, and many virions are only partially matured. These uncleaved prM would play a role in immune evasion. Functionally, involved in immune evasion, pathogenesis and viral replication. Once cleaved off the polyprotein, is targeted to three destinations: the viral replication cycle, the plasma membrane and the extracellular compartment. Essential for viral replication. Required for formation of the replication complex and recruitment of other non-structural proteins to the ER-derived membrane structures. Excreted as a hexameric lipoparticle that plays a role against host immune response. Antagonizing the complement function. Binds to the host macrophages and dendritic cells. Inhibits signal transduction originating from Toll-like receptor 3 (TLR3). Its function is as follows. Disrupts the host endothelial glycocalyx layer of host pulmonary microvascular endothelial cells, inducing degradation of sialic acid and shedding of heparan sulfate proteoglycans. NS1 induces expression of sialidases, heparanase, and activates cathepsin L, which activates heparanase via enzymatic cleavage. These effects are probably linked to the endothelial hyperpermeability observed in severe dengue disease. In terms of biological role, component of the viral RNA replication complex that functions in virion assembly and antagonizes the host immune response. Required cofactor for the serine protease function of NS3. May have membrane-destabilizing activity and form viroporins. Functionally, displays three enzymatic activities: serine protease, NTPase and RNA helicase. NS3 serine protease, in association with NS2B, performs its autocleavage and cleaves the polyprotein at dibasic sites in the cytoplasm: C-prM, NS2A-NS2B, NS2B-NS3, NS3-NS4A, NS4A-2K and NS4B-NS5. NS3 RNA helicase binds RNA and unwinds dsRNA in the 3' to 5' direction. Its function is as follows. Regulates the ATPase activity of the NS3 helicase activity. NS4A allows NS3 helicase to conserve energy during unwinding. Plays a role in the inhibition of the host innate immune response. Interacts with host MAVS and thereby prevents the interaction between RIGI and MAVS. In turn, IFN-beta production is impaired. Interacts with host AUP1 which mediates induction of lipophagy in host cells and facilitates production of virus progeny particles. In terms of biological role, functions as a signal peptide for NS4B and is required for the interferon antagonism activity of the latter. Induces the formation of ER-derived membrane vesicles where the viral replication takes place. Inhibits interferon (IFN)-induced host STAT1 phosphorylation and nuclear translocation, thereby preventing the establishment of cellular antiviral state by blocking the IFN-alpha/beta pathway. Functionally, replicates the viral (+) and (-) RNA genome, and performs the capping of genomes in the cytoplasm. NS5 methylates viral RNA cap at guanine N-7 and ribose 2'-O positions. Besides its role in RNA genome replication, also prevents the establishment of cellular antiviral state by blocking the interferon-alpha/beta (IFN-alpha/beta) signaling pathway. Inhibits host TYK2 and STAT2 phosphorylation, thereby preventing activation of JAK-STAT signaling pathway. May reduce immune responses by preventing the recruitment of the host PAF1 complex to interferon-responsive genes. The chain is Genome polyprotein from Dengue virus type 4 (strain Singapore/8976/1995) (DENV-4).